The chain runs to 148 residues: Large ribosomal subunit protein uL15 (148 aa).

A compositionally biased stretch (basic and acidic residues) spans 1-12 (MSDPIKLHDLRP). The disordered stretch occupies residues 1-45 (MSDPIKLHDLRPAKGANKAKTRVGRGEASKGKTAGRGTKGTKARN).

The protein belongs to the universal ribosomal protein uL15 family. As to quaternary structure, part of the 50S ribosomal subunit.

Its function is as follows. Binds to the 23S rRNA. The protein is Large ribosomal subunit protein uL15 of Corynebacterium urealyticum (strain ATCC 43042 / DSM 7109).